Here is a 175-residue protein sequence, read N- to C-terminus: Pre-mRNA-splicing factor SNT309 (175 aa).

Belongs to the NTC complex (or PRP19-associated complex), composed of at least CEF1, CLF1, ISY1, NTC20, SNT309, SYF1, SYF2, and PRP19. The NTC complex associates with the spliceosome after the release of the U1 and U4 snRNAs and forms the CWC spliceosome subcomplex (or CEF1-associated complex) reminiscent of a late-stage spliceosome composed also of the U2, U5 and U6 snRNAs and at least BUD13, BUD31, BRR2, CDC40, CUS1, CWC2, CWC15, CWC21, CWC22, CWC23, CWC24, CWC25, CWC27, ECM2, HSH155, IST3, LEA1, MSL1, PRP8, PRP9, PRP11, PRP21, PRP22, PRP45, PRP46, SLU7, SMB1, SMD1, SMD2, SMD3, SMX2, SMX3, SNU114, SPP2, RSE1 and YJU2. Interacts with PRP19.

Its subcellular location is the nucleus. Involved in pre-mRNA splicing by stabilizing the NTC (or PRP19-associated complex). As a component of the NTC complex, associates to the spliceosome to mediate conformational rearrangement or to stabilize the structure of the spliceosome after U4 snRNA dissociation, which leads to spliceosome maturation. This is Pre-mRNA-splicing factor SNT309 (SNT309) from Saccharomyces cerevisiae (strain ATCC 204508 / S288c) (Baker's yeast).